We begin with the raw amino-acid sequence, 97 residues long: Protein 9b (97 aa).

A 9b domain is found at 8–97 (VLPALHLVDP…PDEFVVVTAK (90 aa)).

The protein belongs to the coronavirus group 2 protein 9b family. As to quaternary structure, homodimer.

The protein localises to the host cytoplasmic vesicle membrane. Its subcellular location is the host cytoplasm. This chain is Protein 9b, found in Rhinolophus ferrumequinum (Greater horseshoe bat).